The following is a 222-amino-acid chain: Large ribosomal subunit protein uL1 (222 aa).

This sequence belongs to the universal ribosomal protein uL1 family. In terms of assembly, part of the 50S ribosomal subunit.

In terms of biological role, binds directly to 23S rRNA. Probably involved in E site tRNA release. Its function is as follows. Protein L1 is also a translational repressor protein, it controls the translation of its operon by binding to its mRNA. The sequence is that of Large ribosomal subunit protein uL1 from Pyrobaculum islandicum (strain DSM 4184 / JCM 9189 / GEO3).